Consider the following 65-residue polypeptide: Orally active insecticidal peptide-3 (65 aa).

The N-terminal stretch at 1–21 is a signal peptide; the sequence is MKTSVLFAILGLALLFCLSFG. The propeptide occupies 22-29; it reads VELEETGR. 3 disulfides stabilise this stretch: cysteine 31/cysteine 46, cysteine 38/cysteine 51, and cysteine 45/cysteine 58. Proline 62 is subject to Proline amide.

The protein belongs to the neurotoxin 10 (Hwtx-1) family. 46 (Jztx-7/10/12) subfamily. As to expression, expressed by the venom gland.

The protein resides in the secreted. Probable ion channel inhibitor. Shows insecticidal activity when injected into mealworms. The sequence is that of Orally active insecticidal peptide-3 from Selenotypus plumipes (Australian featherleg tarantula).